We begin with the raw amino-acid sequence, 65 residues long: MPKIKTHSSSKKRFKLTGTGKVKRAKAYKSHILTKKTSKRKRNLRKSTIASSANASVIKKLIPYK.

The protein belongs to the bacterial ribosomal protein bL35 family.

This chain is Large ribosomal subunit protein bL35, found in Acetivibrio thermocellus (strain ATCC 27405 / DSM 1237 / JCM 9322 / NBRC 103400 / NCIMB 10682 / NRRL B-4536 / VPI 7372) (Clostridium thermocellum).